Here is a 205-residue protein sequence, read N- to C-terminus: Pre-rRNA-processing protein TSR2 (205 aa).

The tract at residues 144 to 205 (SKRVVHIEGD…LVQPKGRRKH (62 aa)) is disordered. A compositionally biased stretch (acidic residues) spans 152 to 177 (GDDDEDDEDVEDYDDEDEDEEMDEVV).

The protein belongs to the TSR2 family. In terms of assembly, interacts with RPS26A.

It localises to the cytoplasm. The protein localises to the nucleus. Functionally, required for 20S pre-rRNA processing. This Saccharomyces cerevisiae (strain ATCC 204508 / S288c) (Baker's yeast) protein is Pre-rRNA-processing protein TSR2.